Consider the following 479-residue polypeptide: UDP-glycosyltransferase 71B6 (479 aa).

Residues Ser-275, 342–344, 359–367, and 381–384 contribute to the UDP-alpha-D-glucose site; these read AEQ, HGGWNSTLE, and YAEQ.

It belongs to the UDP-glycosyltransferase family.

In terms of biological role, glucosyltransferase that glucosylates the (+) enantiomer of abscisic acid ((+)-ABA). Is not active on structural analogs with alterations to the 8'- and 9'- methyl groups. The polypeptide is UDP-glycosyltransferase 71B6 (UGT71B6) (Arabidopsis thaliana (Mouse-ear cress)).